Reading from the N-terminus, the 68-residue chain is Protein SlyX homolog (68 aa).

The protein belongs to the SlyX family.

In Pseudomonas putida (strain ATCC 700007 / DSM 6899 / JCM 31910 / BCRC 17059 / LMG 24140 / F1), this protein is Protein SlyX homolog.